A 406-amino-acid polypeptide reads, in one-letter code: Cysteine desulfurase (406 aa).

At Lys226 the chain carries N6-(pyridoxal phosphate)lysine. The Cysteine persulfide intermediate role is filled by Cys364.

It belongs to the class-V pyridoxal-phosphate-dependent aminotransferase family. Csd subfamily. Homodimer. Interacts with SufE and the SufBCD complex composed of SufB, SufC and SufD. The interaction with SufE is required to mediate the direct transfer of the sulfur atom from the S-sulfanylcysteine. It depends on pyridoxal 5'-phosphate as a cofactor.

It is found in the cytoplasm. It carries out the reaction (sulfur carrier)-H + L-cysteine = (sulfur carrier)-SH + L-alanine. It catalyses the reaction L-selenocysteine + AH2 = hydrogenselenide + L-alanine + A + H(+). Its pathway is cofactor biosynthesis; iron-sulfur cluster biosynthesis. Its function is as follows. Cysteine desulfurases mobilize the sulfur from L-cysteine to yield L-alanine, an essential step in sulfur metabolism for biosynthesis of a variety of sulfur-containing biomolecules. Component of the suf operon, which is activated and required under specific conditions such as oxidative stress and iron limitation. Acts as a potent selenocysteine lyase in vitro, that mobilizes selenium from L-selenocysteine. Selenocysteine lyase activity is however unsure in vivo. In Escherichia coli (strain SE11), this protein is Cysteine desulfurase.